Reading from the N-terminus, the 288-residue chain is Pantothenate synthetase (288 aa).

27–34 (MGALHEGH) is a binding site for ATP. His34 functions as the Proton donor in the catalytic mechanism. Gln58 and Gln150 together coordinate (R)-pantoate. Residue Gln58 participates in beta-alanine binding. Residues Leu173 and 181 to 184 (YSSR) each bind ATP.

Belongs to the pantothenate synthetase family. In terms of assembly, homodimer.

The protein localises to the cytoplasm. It catalyses the reaction (R)-pantoate + beta-alanine + ATP = (R)-pantothenate + AMP + diphosphate + H(+). The protein operates within cofactor biosynthesis; (R)-pantothenate biosynthesis; (R)-pantothenate from (R)-pantoate and beta-alanine: step 1/1. Functionally, catalyzes the condensation of pantoate with beta-alanine in an ATP-dependent reaction via a pantoyl-adenylate intermediate. The polypeptide is Pantothenate synthetase (Tropheryma whipplei (strain TW08/27) (Whipple's bacillus)).